Reading from the N-terminus, the 1721-residue chain is Latent-transforming growth factor beta-binding protein 1 (1721 aa).

The first 23 residues, 1–23 (MAGAWLRWGLLLWAGLLASSAHG), serve as a signal peptide directing secretion. A compositionally biased stretch (low complexity) spans 64-81 (RSSAAAGAPSRASPGVPS). The interval 64–158 (RSSAAAGAPS…SGGGSRLQVH (95 aa)) is disordered. Pro residues predominate over residues 99–111 (RPPPPPPPEPARP). Residues 112–130 (AVPGGQLHPNPGGHPAAAP) show a composition bias toward low complexity. Residues 187–219 (TKPSCVPPCQNGGMCLRPQLCVCKPGTKGKACE) enclose the EGF-like 1 domain. Cystine bridges form between C191-C201, C195-C207, and C209-C218. The interval 228–259 (SPVFGGQSPGAASSWGPPEQAAKHTSSKKADT) is disordered. Residues N347 and N378 are each glycosylated (N-linked (GlcNAc...) asparagine). One can recognise an EGF-like 2 domain in the interval 399–431 (RVVICHLPCMNGGQCSSRDKCQCPPNFTGKLCQ). 6 disulfides stabilise this stretch: C403–C413, C407–C419, C421–C430, C559–C581, C568–C594, and C582–C597. A glycan (N-linked (GlcNAc...) asparagine) is linked at N424. A TB 1 domain is found at 557–609 (GRCFQETIGSQCGKALPGLSKQEDCCGTVGTSWGFNKCQKCPKKPSYHGYNQM). A glycan (N-linked (GlcNAc...) asparagine) is linked at N620. The 38-residue stretch at 626-663 (DINECQLQGVCPNGECLNTMGSYRCTCKIGFGPDPTFS) folds into the EGF-like 3; calcium-binding domain. Cystine bridges form between C630/C641, C636/C650, C652/C665, C679/C702, C689/C714, C703/C717, and C704/C729. Residue S647 is glycosylated (O-linked (Glc) serine). The 53-residue stretch at 677–729 (GPCYRLVSSGRQCMHPLSVHLTKQLCCCSVGKAWGPHCEKCPLPGTAAFKEIC) folds into the TB 2 domain. Residues 750–811 (VGKGPVFVKP…APPEKEIPSL (62 aa)) are disordered. O-linked (GalNAc...) threonine glycans are attached at residues T769 and T801. Positions 873–910 (EINECTVNPDICGAGHCINLPVRYTCICYEGYRFSEQQ) constitute an EGF-like 4; calcium-binding domain. Cystine bridges form between C877-C889, C884-C898, C900-C913, C919-C931, C926-C940, C942-C955, C961-C972, C967-C981, C984-C996, C1002-C1013, C1008-C1022, C1025-C1036, C1042-C1053, C1048-C1062, C1064-C1077, C1083-C1094, C1089-C1103, C1105-C1118, C1124-C1135, C1130-C1144, C1146-C1159, C1165-C1177, C1172-C1186, C1188-C1200, C1206-C1218, C1212-C1227, C1229-C1242, C1248-C1260, and C1254-C1269. The 42-residue stretch at 915–956 (DIDECTQVQHLCSQGRCENTEGSFLCICPAGFMASEEGTNCI) folds into the EGF-like 5; calcium-binding domain. S937 carries an O-linked (Glc) serine glycan. The region spanning 957–997 (DVDECLRPDVCGEGHCVNTVGAFRCEYCDSGYRMTQRGRCE) is the EGF-like 6; calcium-binding domain. N974 carries the (3R)-3-hydroxyasparagine modification. The EGF-like 7; calcium-binding domain maps to 998–1037 (DIDECLNPSTCPDEQCVNSPGSYQCVPCTEGFRGWNGQCL). O-linked (Glc) serine glycosylation occurs at S1019. The region spanning 1038–1078 (DVDECLEPNVCANGDCSNLEGSYMCSCHKGYTRTPDHKHCR) is the EGF-like 8; calcium-binding domain. An O-linked (Glc) serine glycan is attached at S1059. The 41-residue stretch at 1079-1119 (DIDECQQGNLCVNGQCKNTEGSFRCTCGQGYQLSAAKDQCE) folds into the EGF-like 9; calcium-binding domain. One can recognise an EGF-like 10; calcium-binding domain in the interval 1120-1160 (DIDECQHRHLCAHGQCRNTEGSFQCVCDQGYRASGLGDHCE). N1137 bears the (3R)-3-hydroxyasparagine mark. Residue S1141 is glycosylated (O-linked (Glc) serine). An EGF-like 11; calcium-binding domain is found at 1161 to 1201 (DINECLEDKSVCQRGDCINTAGSYDCTCPDGFQLDDNKTCQ). Residues 1174-1176 (RGD) carry the Cell attachment site motif. N-linked (GlcNAc...) asparagine glycosylation occurs at N1197. Positions 1202–1243 (DINECEHPGLCGPQGECLNTEGSFHCVCQQGFSISADGRTCE) constitute an EGF-like 12; calcium-binding domain. Residue S1224 is glycosylated (O-linked (Glc) serine). Residues 1244–1281 (DIDECVNNTVCDSHGFCDNTAGSFRCLCYQGFQAPQDG) enclose the EGF-like 13; calcium-binding domain. A glycan (N-linked (GlcNAc...) asparagine) is linked at N1250. Residues 1286–1328 (DVNECELLSGVCGEAFCENVEGSFLCVCADENQEYSPMTGQCR) form the EGF-like 14; calcium-binding domain. Positions 1344–1411 (EEKKECYYNL…PKGKGFVPAG (68 aa)) are 8-Cys3 region. The TB 3 domain maps to 1347–1401 (KECYYNLNDASLCDNVLAPNVTKQECCCTSGVGWGDNCEIFPCPVLGTAEFTEMC). 4 cysteine pairs are disulfide-bonded: C1349/C1372, C1359/C1384, C1373/C1389, and C1374/C1401. An N-linked (GlcNAc...) asparagine glycan is attached at N1366. Phosphoserine; by FAM20C is present on S1414. Residues 1424–1466 (DADECLLFGQEICKNGFCLNTRPGYECYCKQGTYYDPVKLQCF) form the EGF-like 15; calcium-binding domain. Residues 1467–1503 (DMDECQDPSSCIDGQCVNTEGSYNCFCTHPMVLDASE) form the EGF-like 16; calcium-binding domain. 6 cysteine pairs are disulfide-bonded: C1471–C1482, C1477–C1491, C1526–C1550, C1536–C1562, C1551–C1565, and C1552–C1577. The O-linked (Glc) serine glycan is linked to S1488. The segment at 1507 to 1721 (IRPAESNEQI…LNLEKDSDLE (215 aa)) is C-terminal domain. The 54-residue stretch at 1524 to 1577 (DLCWEHLSDEYVCSRPLVGKQTTYTECCCLYGEAWGMQCALCPLKDSDDYAQLC) folds into the TB 4 domain. S1597 and S1616 each carry phosphoserine. The 37-residue stretch at 1621-1657 (QAEECGILNGCENGRCVRVQEGYTCDCFDGYHLDTAK) folds into the EGF-like 17 domain. Disulfide bonds link C1625/C1636, C1631/C1645, C1666/C1681, C1676/C1690, and C1692/C1705. One can recognise an EGF-like 18; calcium-binding domain in the interval 1662-1706 (DVNECDELNNRMSLCKNAKCINTDGSYKCLCLPGYVPSDKPNYCT). The O-linked (Glc) serine glycan is linked to S1687.

Belongs to the LTBP family. In terms of assembly, interacts with TGFB1; associates via disulfide bonds with the Latency-associated peptide chain (LAP) regulatory chain of TGFB1, leading to regulate activation of TGF-beta-1. LTBP1 does not bind directly to TGF-beta-1, the active chain of TGFB1. Interacts (via C-terminal domain) with FBN1 (via N-terminal domain). Interacts with FBN2. Interacts with ADAMTSL2. Interacts with EFEMP2. In terms of processing, contains hydroxylated asparagine residues. Isoform Short N-terminus is blocked. Post-translationally, two intrachain disulfide bonds from the TB3 domain are rearranged upon TGFB1 binding, and form interchain bonds with TGFB1 propeptide, anchoring it to the extracellular matrix. In terms of processing, O-glycosylated on serine residues by POGLUT2 and POGLUT3. As to expression, expressed in the aorta (at protein level). Isoform Long: Expressed in fibroblasts.

It is found in the secreted. It localises to the extracellular space. The protein resides in the extracellular matrix. Functionally, key regulator of transforming growth factor beta (TGFB1, TGFB2 and TGFB3) that controls TGF-beta activation by maintaining it in a latent state during storage in extracellular space. Associates specifically via disulfide bonds with the Latency-associated peptide (LAP), which is the regulatory chain of TGF-beta, and regulates integrin-dependent activation of TGF-beta. Outcompeted by LRRC32/GARP for binding to LAP regulatory chain of TGF-beta. The protein is Latent-transforming growth factor beta-binding protein 1 of Homo sapiens (Human).